Reading from the N-terminus, the 1410-residue chain is DNA-directed RNA polymerase subunit beta' (1410 aa).

C70, C72, C85, and C88 together coordinate Zn(2+). Mg(2+)-binding residues include D460, D462, and D464. The Zn(2+) site is built by C814, C888, C895, and C898.

The protein belongs to the RNA polymerase beta' chain family. The RNAP catalytic core consists of 2 alpha, 1 beta, 1 beta' and 1 omega subunit. When a sigma factor is associated with the core the holoenzyme is formed, which can initiate transcription. Mg(2+) is required as a cofactor. Zn(2+) serves as cofactor.

It catalyses the reaction RNA(n) + a ribonucleoside 5'-triphosphate = RNA(n+1) + diphosphate. Its function is as follows. DNA-dependent RNA polymerase catalyzes the transcription of DNA into RNA using the four ribonucleoside triphosphates as substrates. This chain is DNA-directed RNA polymerase subunit beta', found in Buchnera aphidicola subsp. Cinara cedri (strain Cc).